The following is a 174-amino-acid chain: ATP-dependent protease subunit HslV (174 aa).

Residue Thr2 is part of the active site. Residues Gly157, Cys160, and Thr163 each coordinate Na(+).

It belongs to the peptidase T1B family. HslV subfamily. A double ring-shaped homohexamer of HslV is capped on each side by a ring-shaped HslU homohexamer. The assembly of the HslU/HslV complex is dependent on binding of ATP.

The protein resides in the cytoplasm. The enzyme catalyses ATP-dependent cleavage of peptide bonds with broad specificity.. Its activity is regulated as follows. Allosterically activated by HslU binding. Protease subunit of a proteasome-like degradation complex believed to be a general protein degrading machinery. The protein is ATP-dependent protease subunit HslV of Shewanella halifaxensis (strain HAW-EB4).